The sequence spans 156 residues: Transcription antitermination protein NusB (156 aa).

This sequence belongs to the NusB family.

Functionally, involved in transcription antitermination. Required for transcription of ribosomal RNA (rRNA) genes. Binds specifically to the boxA antiterminator sequence of the ribosomal RNA (rrn) operons. The chain is Transcription antitermination protein NusB from Mycobacterium tuberculosis (strain CDC 1551 / Oshkosh).